The sequence spans 331 residues: Aldo-keto reductase family 7 member A3 (331 aa).

S6 carries the post-translational modification Phosphoserine. 3 residues coordinate NADPH: M17, D44, and Y49. Y49 functions as the Proton donor in the catalytic mechanism. S85 carries the post-translational modification Phosphoserine. 9 residues coordinate NADPH: H113, S143, N144, N198, L200, G202, K208, Y209, and R222. T227 is modified (phosphothreonine). Residues S290, Q294, and N298 each coordinate NADPH.

It belongs to the aldo/keto reductase family. Aldo/keto reductase 2 subfamily. In terms of assembly, homodimer. In terms of tissue distribution, expressed in colon, kidney, liver, pancreas, adenocarcinoma and endometrium.

Its subcellular location is the cytoplasm. It carries out the reaction a primary alcohol + NADP(+) = an aldehyde + NADPH + H(+). The enzyme catalyses aflatoxin B1 dialdehyde + NADPH + H(+) = aflatoxin B1 C(6a)-monoaldehyde + NADP(+). It catalyses the reaction aflatoxin B1 dialdehyde + NADPH + H(+) = aflatoxin B1 C(8)-monoaldehyde + NADP(+). The catalysed reaction is aflatoxin B1 C(6a)-monoaldehyde + NADPH + 2 H(+) = aflatoxin B1 triol + NADP(+). Its activity is regulated as follows. Inhibited by citrate. Functionally, catalyzes the NADPH-dependent reduction of various carbonyl-containing compounds, including aldehydes, ketones, and toxic products from cellular metabolism or environmental exposure. Can reduce the dialdehyde form of aflatoxin B1 (AFB1) into alcohol derivatives, via monoaldehydes intermediates. Can reduce the dialdehyde form of aflatoxin B1 (AFB1) into alcohol derivatives, via monoaldehydes intermediates, thus preventing the formation of protein adducts that contribute to AFB1-induced toxicity. In Homo sapiens (Human), this protein is Aldo-keto reductase family 7 member A3.